The following is a 571-amino-acid chain: Urease subunit alpha (571 aa).

The Urease domain maps to 133 to 571; the sequence is GGIDTHVHFI…LPLTQRYFLF (439 aa). Ni(2+) is bound by residues His138, His140, and Lys221. Lys221 carries the post-translational modification N6-carboxylysine. His223 provides a ligand contact to substrate. Residues His250 and His276 each contribute to the Ni(2+) site. Catalysis depends on His324, which acts as the Proton donor. Asp364 lines the Ni(2+) pocket.

It belongs to the metallo-dependent hydrolases superfamily. Urease alpha subunit family. As to quaternary structure, heterotrimer of UreA (gamma), UreB (beta) and UreC (alpha) subunits. Three heterotrimers associate to form the active enzyme. Ni cation serves as cofactor. In terms of processing, carboxylation allows a single lysine to coordinate two nickel ions.

It localises to the cytoplasm. It carries out the reaction urea + 2 H2O + H(+) = hydrogencarbonate + 2 NH4(+). The protein operates within nitrogen metabolism; urea degradation; CO(2) and NH(3) from urea (urease route): step 1/1. This Staphylococcus aureus (strain MRSA252) protein is Urease subunit alpha.